The sequence spans 447 residues: Argininosuccinate synthase (447 aa).

ATP is bound by residues 17–25 (AFSGGLDTS) and alanine 43. Residue tyrosine 99 participates in L-citrulline binding. Positions 129 and 131 each coordinate ATP. The L-aspartate site is built by threonine 131, asparagine 135, and aspartate 136. Asparagine 135 lines the L-citrulline pocket. ATP is bound at residue aspartate 136. Arginine 139 and serine 192 together coordinate L-citrulline. Aspartate 194 contacts ATP. L-citrulline contacts are provided by threonine 201, glutamate 203, and glutamate 280.

The protein belongs to the argininosuccinate synthase family. Type 2 subfamily. In terms of assembly, homotetramer.

The protein localises to the cytoplasm. The enzyme catalyses L-citrulline + L-aspartate + ATP = 2-(N(omega)-L-arginino)succinate + AMP + diphosphate + H(+). The protein operates within amino-acid biosynthesis; L-arginine biosynthesis; L-arginine from L-ornithine and carbamoyl phosphate: step 2/3. In Citrobacter koseri (strain ATCC BAA-895 / CDC 4225-83 / SGSC4696), this protein is Argininosuccinate synthase.